The primary structure comprises 197 residues: Recombination protein RecR (197 aa).

A C4-type zinc finger spans residues 57–72; it reads CSVCFALTEQNPCPIC. Residues 79–174 form the Toprim domain; that stretch reads SVICVVETSQ…RVTRLAHGIP (96 aa).

The protein belongs to the RecR family.

May play a role in DNA repair. It seems to be involved in an RecBC-independent recombinational process of DNA repair. It may act with RecF and RecO. This chain is Recombination protein RecR, found in Trichlorobacter lovleyi (strain ATCC BAA-1151 / DSM 17278 / SZ) (Geobacter lovleyi).